Reading from the N-terminus, the 90-residue chain is Protein LURE 1.4 (90 aa).

The N-terminal stretch at 1-19 (MKCPSIFLTLLIFVSSCTS) is a signal peptide. Asn-23 is a glycosylation site (N-linked (GlcNAc...) asparagine). Cystine bridges form between Cys-58–Cys-75, Cys-61–Cys-82, and Cys-65–Cys-84. Positions 67-87 (RRGKYIRTCSFERKLCRCSIS) are PRK6 binding.

It belongs to the DEFL family. In terms of assembly, binds to PRK6 LRRs. In terms of tissue distribution, expressed in the pistil. Detected exclusively in the synergid cells.

It localises to the secreted. Pollen tube attractants guiding pollen tubes to the ovular micropyle. This chain is Protein LURE 1.4, found in Arabidopsis thaliana (Mouse-ear cress).